Consider the following 272-residue polypeptide: Putative B3 domain-containing protein Os02g0455900 (272 aa).

The segment at residues 30–134 is a DNA-binding region (TF-B3); the sequence is GKVLMPSDVS…RFFICCRCTC (105 aa). The disordered stretch occupies residues 189-227; that stretch reads TASLGCAAAQPPQVPPTPTPRRRRRSMMVHPEPPEHTTD.

Its subcellular location is the nucleus. The protein is Putative B3 domain-containing protein Os02g0455900 of Oryza sativa subsp. japonica (Rice).